We begin with the raw amino-acid sequence, 412 residues long: uncharacterized protein (412 aa).

Residue histidine 49 participates in Zn(2+) binding. The Proton acceptor role is filled by glutamate 52. Zn(2+) contacts are provided by histidine 53 and glutamate 129.

It belongs to the peptidase M16 family. Requires Zn(2+) as cofactor.

This is an uncharacterized protein from Rickettsia felis (strain ATCC VR-1525 / URRWXCal2) (Rickettsia azadi).